The primary structure comprises 137 residues: Putative pre-16S rRNA nuclease (137 aa).

Belongs to the YqgF nuclease family.

It localises to the cytoplasm. Functionally, could be a nuclease involved in processing of the 5'-end of pre-16S rRNA. The chain is Putative pre-16S rRNA nuclease from Mycoplasmopsis synoviae (strain 53) (Mycoplasma synoviae).